The chain runs to 479 residues: Glycogen synthase (479 aa).

Lys-15 lines the ADP-alpha-D-glucose pocket.

This sequence belongs to the glycosyltransferase 1 family. Bacterial/plant glycogen synthase subfamily.

It catalyses the reaction [(1-&gt;4)-alpha-D-glucosyl](n) + ADP-alpha-D-glucose = [(1-&gt;4)-alpha-D-glucosyl](n+1) + ADP + H(+). Its pathway is glycan biosynthesis; glycogen biosynthesis. Functionally, synthesizes alpha-1,4-glucan chains using ADP-glucose. The sequence is that of Glycogen synthase from Pectobacterium carotovorum subsp. carotovorum (strain PC1).